The chain runs to 147 residues: uncharacterized protein (147 aa).

4Fe-4S ferredoxin-type domains lie at 80–109 (WYPK…AENG) and 110–141 (KVVV…FPDE). [4Fe-4S] cluster contacts are provided by cysteine 89, cysteine 92, cysteine 95, cysteine 99, cysteine 119, cysteine 123, cysteine 126, and cysteine 130.

It depends on [4Fe-4S] cluster as a cofactor.

This is an uncharacterized protein from Methanocaldococcus jannaschii (strain ATCC 43067 / DSM 2661 / JAL-1 / JCM 10045 / NBRC 100440) (Methanococcus jannaschii).